The following is a 571-amino-acid chain: MRTSNYLLSTLKETPNDAEVVSHQLMLRAGMIRKLASGLYTWLPTGLRVLRKVENIVRQEIDNAGAVETLMPVVQPFELWEETGRSEKMGPELLRFTDRHTRPFVLSPTAEEVITSLVRNEVSSYKQLPLNLYQIQTKFRDERRPRFGVMRAREFCMMDAYSFDIDKEGLEKSYQAMHDAYCKAFDRMGLEYRPVLADSGAIGGSGSQEFHVLAESGEDLIAFSTESDYAANIEKAEAAAPAGERAEPTQEMTLVDTPNAKTIAELVEQHGLAIEKTVKTLFVKASDEVDADIIALIVRGDHELNEVKAENLPQVASPLEMATEEEMRALIGAGAGSLGPVGLELPFIVDRSVAVMSDFGAGANIDDKHYFGINWGRDVELGQVEDLRNVVEGDPSPCGQGTLMLKRGIEVGHIFQLGNVYSEAMNCGVLGPDGKNVILEMGCYGIGVSRVVASAIEQNHDKYGIIWPDALAPFQVAIVPMNMHKSEEVKEAAEKLYAELTAMGIEVLFDDRKERPGVMFSDMELIGIPHTIVIGDRSMKEGNFEYKNRRSGEKTAVAMADIVEHVKAQLQ.

Belongs to the class-II aminoacyl-tRNA synthetase family. ProS type 1 subfamily. As to quaternary structure, homodimer.

It is found in the cytoplasm. The enzyme catalyses tRNA(Pro) + L-proline + ATP = L-prolyl-tRNA(Pro) + AMP + diphosphate. Functionally, catalyzes the attachment of proline to tRNA(Pro) in a two-step reaction: proline is first activated by ATP to form Pro-AMP and then transferred to the acceptor end of tRNA(Pro). As ProRS can inadvertently accommodate and process non-cognate amino acids such as alanine and cysteine, to avoid such errors it has two additional distinct editing activities against alanine. One activity is designated as 'pretransfer' editing and involves the tRNA(Pro)-independent hydrolysis of activated Ala-AMP. The other activity is designated 'posttransfer' editing and involves deacylation of mischarged Ala-tRNA(Pro). The misacylated Cys-tRNA(Pro) is not edited by ProRS. This Vibrio campbellii (strain ATCC BAA-1116) protein is Proline--tRNA ligase.